The sequence spans 6199 residues: Adhesion G-protein coupled receptor V1 (6199 aa).

The signal sequence occupies residues 1-23 (MPAVLALSGLLLMLLTVSVRSES). Calx-beta domains are found at residues 24–109 (AELR…VFIL), 126–230 (ATIT…VQLT), 249–355 (ISRN…QVVL), 380–480 (DKPY…LKLI), 637–737 (PDIA…ILTL), 753–853 (SREI…VVLS), 869–972 (NITV…ITLL), 997–1083 (IYFA…YIVL), 1099–1199 (TVVI…LRLM), 1434–1534 (PIPG…FYLQ), 1563–1655 (GLFS…RVRL), 1835–1937 (IIVT…VRLT), 1963–2063 (LFVF…FLEL), 2092–2190 (QVII…RIEL), 2208–2308 (ITIL…KVEL), 2425–2525 (AAFC…FIIK), 2582–2659 (VREE…QIGL), 2673–2773 (DTVT…RVIL), 2814–2908 (PSSL…LVNI), 2931–3029 (EIII…QLIL), and 3054–3154 (GHGI…TVTL). At 24-5803 (AELRFQGQTQ…IESLASFNEA (5780 aa)) the chain is on the extracellular side. EAR repeat units follow at residues 3239–3284 (VLAV…KWQG), 3285–3333 (VFVP…RVQA), 3336–3372 (NLTL…VWNR), 3374–3420 (SFFL…QWTD), 3422–3467 (RFQN…LWGS), and 3471–3513 (VFQQ…SWRS). Calx-beta domains are found at residues 3562 to 3605 (SNQS…RVSL), 3619 to 3719 (QVTF…TIVL), 3778 to 3854 (ITLS…FVNI), 3916 to 3985 (VLRL…MVKL), 4000 to 4103 (VVVS…IQLL), 4120 to 4220 (VVIR…QLRL), 4247 to 4335 (HGLF…FLNI), 4371 to 4471 (VIIQ…LQLT), 4493 to 4593 (DSPN…IIML), 4615 to 4715 (KFGD…TLRL), 4993 to 5076 (QHLV…VNLT), 5125 to 5225 (SEDS…IYLS), and 5260 to 5360 (VGFS…LVEV). One can recognise a GAIN-B domain in the interval 5636–5801 (PYFTIAAHHW…AEIESLASFN (166 aa)). Intrachain disulfides connect cysteine 5751-cysteine 5780 and cysteine 5768-cysteine 5782. Residues 5751–5801 (CLLWNQAAESWLSDGQFCRLVDDTQNYVECACSHLSIYTAYAEIESLASFN) form a GPS region. A helical transmembrane segment spans residues 5804-5824 (FYAAGFICISGFALAMVSHLM). The Cytoplasmic segment spans residues 5825 to 5834 (CARFLMFAAK). Residues 5835 to 5855 (LLTHMMVACLGTQICFLVSAF) traverse the membrane as a helical segment. The Extracellular portion of the chain corresponds to 5856–5864 (RGRMFSEDS). Residues 5865 to 5885 (CAALGLFFHYFHLSQFGWMLV) traverse the membrane as a helical segment. The Cytoplasmic portion of the chain corresponds to 5886–5908 (QAINFWQILVMNDEHTERRYLLY). The helical transmembrane segment at 5909–5929 (FLLSWGLPALVIIVLVVVLLG) threads the bilayer. At 5930–5954 (GFGWSIHSVYGLVQGDLCFIPNVYA) the chain is on the extracellular side. The chain crosses the membrane as a helical span at residues 5955-5975 (ALCTAALVPLICLVGVLVIFI). Topologically, residues 5976-6001 (HAYQVTQQWKAYDDIYRGRTNSSEVP) are cytoplasmic. A helical membrane pass occupies residues 6002 to 6022 (MMLYLFALVTLVCVWAGLHMA). The Extracellular portion of the chain corresponds to 6023–6025 (YRY). Residues 6026 to 6046 (IWMLILLVIFNIFLGLYVFSV) traverse the membrane as a helical segment. Residues 6047–6199 (YFVMHNQLFW…RRIPIADTHL (153 aa)) are Cytoplasmic-facing.

This sequence belongs to the G-protein coupled receptor 2 family. Adhesion G-protein coupled receptor (ADGR) subfamily. In terms of assembly, heterodimer of 2 chains generated by proteolytic processing; the large extracellular N-terminal fragment and the membrane-bound C-terminal fragment predominantly remain associated and non-covalently linked. Post-translationally, autoproteolytically processed at the GPS region of the GAIN-B domain; this cleavage modulates receptor activity.

It localises to the cell membrane. It is found in the cell projection. The protein localises to the stereocilium membrane. The protein resides in the photoreceptor inner segment. Receptor that may have an important role in the development of the sensory nervous system. The chain is Adhesion G-protein coupled receptor V1 (adgrv1) from Danio rerio (Zebrafish).